Reading from the N-terminus, the 212-residue chain is Protein RER1C (212 aa).

M1 carries the post-translational modification N-acetylmethionine. 4 helical membrane-spanning segments follow: residues T55 to V75, G82 to L102, E135 to F155, and V157 to L177.

The protein belongs to the RER1 family.

Its subcellular location is the membrane. Functionally, involved in the retrieval of endoplasmic reticulum membrane proteins from the early Golgi compartment. This chain is Protein RER1C (RER1C), found in Arabidopsis thaliana (Mouse-ear cress).